The sequence spans 297 residues: Acetylglutamate kinase (297 aa).

Residues 72–73 (GG), arginine 94, and asparagine 193 each bind substrate.

The protein belongs to the acetylglutamate kinase family. ArgB subfamily.

The protein localises to the cytoplasm. The catalysed reaction is N-acetyl-L-glutamate + ATP = N-acetyl-L-glutamyl 5-phosphate + ADP. It participates in amino-acid biosynthesis; L-arginine biosynthesis; N(2)-acetyl-L-ornithine from L-glutamate: step 2/4. Its function is as follows. Catalyzes the ATP-dependent phosphorylation of N-acetyl-L-glutamate. In Mycobacterium leprae (strain TN), this protein is Acetylglutamate kinase.